Consider the following 784-residue polypeptide: Replication protein A 70 kDa DNA-binding subunit E (784 aa).

A disordered region spans residues histidine 114–alanine 224. 2 stretches are compositionally biased toward polar residues: residues lysine 132 to asparagine 148 and serine 167 to threonine 190. The OB DNA-binding region spans tryptophan 241–asparagine 327. Residues cysteine 532 to cysteine 558 form a C4-type zinc finger. Disordered regions lie at residues leucine 678–valine 707 and alanine 746–tyrosine 784. The span at glycine 695 to valine 707 shows a compositional bias: polar residues. Over residues tyrosine 760 to leucine 776 the composition is skewed to gly residues.

The protein belongs to the replication factor A protein 1 family. As to quaternary structure, heterotrimer of RPA1, RPA2 and RPA3 (canonical replication protein A complex).

The protein localises to the nucleus. In terms of biological role, component of the replication protein A complex (RPA) required for DNA recombination, repair and replication. The activity of RPA is mediated by single-stranded DNA binding and protein interactions. Probably involved in repair of double-strand DNA breaks (DSBs) induced by genotoxic stresses. This is Replication protein A 70 kDa DNA-binding subunit E (RPA1E) from Arabidopsis thaliana (Mouse-ear cress).